Consider the following 334-residue polypeptide: Protein-glutamate methylesterase FrzG (334 aa).

The 188-residue stretch at 147–334 folds into the CheB-type methylesterase domain; that stretch reads PYPLVAIAAS…AALMQWVDVC (188 aa). Residues serine 156, histidine 183, and aspartate 276 contribute to the active site.

It carries out the reaction [protein]-L-glutamate 5-O-methyl ester + H2O = L-glutamyl-[protein] + methanol + H(+). Probable methylesterase. Required for the normal aggregation of M.xanthus cells during fruiting body formation. It is also a component of a sensory transduction pathway that controls the frequency at which cells reverse their gliding direction. It may remove the methyl group from the gamma-glutamyl methyl ester residues in FrzCD. The sequence is that of Protein-glutamate methylesterase FrzG (frzG) from Myxococcus xanthus.